Reading from the N-terminus, the 262-residue chain is Spindlin-1 (262 aa).

Positions methionine 1–proline 49 are disordered. Glycyl lysine isopeptide (Lys-Gly) (interchain with G-Cter in SUMO2) cross-links involve residues lysine 7 and lysine 28. A compositionally biased stretch (basic residues) spans methionine 27 to threonine 38. The residue at position 44 (lysine 44) is an N6-acetyllysine; alternate. A Glycyl lysine isopeptide (Lys-Gly) (interchain with G-Cter in SUMO2); alternate cross-link involves residue lysine 44. A tudor-like domain 1 region spans residues isoleucine 53 to aspartate 116. The segment at glycine 93 to tyrosine 98 is histone H3K4me3 and H3R8me2a binding. 2 positions are modified to phosphoserine; by AURKA: serine 109 and serine 124. Positions methionine 132–methionine 193 are tudor-like domain 2. Position 142 (glutamate 142) is a region of interest, histone H3K4me3 and H3R8me2a binding. Phosphoserine is present on serine 199. The segment at leucine 213–serine 262 is tudor-like domain 3. A histone H3K4me3 and H3R8me2a binding region spans residues aspartate 250–histidine 252.

It belongs to the SPIN/STSY family. As to quaternary structure, homodimer; may form higher-order oligomers. Interacts with TCF7L2/TCF4; the interaction is direct. Interacts with HABP4 and SERBP1. Interacts with SPINDOC; SPINDOC stabilizes SPIN1 and enhances its association with bivalent H3K4me3K9me3 mark. Interacts with SPOCD1; promoting recruitment of PIWIL4 and SPOCD1 to transposons. Phosphorylated during oocyte meiotic maturation.

The protein resides in the nucleus. Its subcellular location is the nucleolus. In terms of biological role, chromatin reader that specifically recognizes and binds histone H3 both trimethylated at 'Lys-4' and 'Lys-9' (H3K4me3K9me3) and is involved in piRNA-mediated retrotransposon silencing during spermatogenesis. Plays a key role in the initiation of the PIWIL4-piRNA pathway, a pathway that directs transposon DNA methylation and silencing in the male embryonic germ cells, by promoting recruitment of DNA methylation machinery to transposons: binds young, but not old, LINE1 transposons, which are specifically marked with H3K4me3K9me3, and promotes the recruitment of PIWIL4 and SPOCD1 to transposons, leading to piRNA-directed DNA methylation. Also recognizes and binds histone H3 both trimethylated at 'Lys-4' and asymmetrically dimethylated at 'Arg-8' (H3K4me3 and H3R8me2a) and acts as an activator of Wnt signaling pathway downstream of PRMT2. Overexpression induces metaphase arrest and chromosomal instability. Overexpression induces metaphase arrest and chromosomal instability. Localizes to active rDNA loci and promotes the expression of rRNA genes. May play a role in cell-cycle regulation during the transition from gamete to embryo. Involved in oocyte meiotic resumption, a process that takes place before ovulation to resume meiosis of oocytes blocked in prophase I: may act by regulating maternal transcripts to control meiotic resumption. The polypeptide is Spindlin-1 (Spin1) (Rattus norvegicus (Rat)).